The following is a 535-amino-acid chain: Ribonuclease Y (535 aa).

Residues 4–24 (IILLIVSALIGLILGYALISI) form a helical membrane-spanning segment. Positions 118–141 (ENLSSKEKVLDSKEQSLTDKSKHI) are disordered. The KH domain maps to 225-285 (TITSVHLPDD…IRREIARMTL (61 aa)). In terms of domain architecture, HD spans 351-444 (VLRHSVEVGK…VAAADALSSA (94 aa)).

The protein belongs to the RNase Y family.

The protein resides in the cell membrane. In terms of biological role, endoribonuclease that initiates mRNA decay. The chain is Ribonuclease Y from Streptococcus pyogenes serotype M18 (strain MGAS8232).